A 447-amino-acid polypeptide reads, in one-letter code: MPDVESFWHSLEEAYQAILSAPSFDAWIKTTRPLKLDNNQLWLEVPSAVHRDYWEKNLSAKIVETGFKLTGAEVMPHFVVADEKDAALAQELEEPAEEEVVFSEQSKKAMLNPKYTFDTFVIGKGNQMAHAAALVVAEDPGSIYNPLFFYGGVGLGKTHLMHAIGHQMLVNQPDAKVKYVSSETFTNEFINSIQTKTSEQFRKEYRNVDLLLVDDIQFLAEKEATLEEFFHTFNDLYNENKQIVLTSDRPPNDIPKLPERLVSRFAWGLSVDITPPDLETRIAILRKKADAERLEIPDDTLSYIAGQIDSNIRELEGALVRVQAFATINGEDITTSLAADALKSLKSVGSKNQLSILQIQEEVSKYYHVPLKDLKGKKRVKTIVVPRQISMYLAREMTDNSLPKIGAEFGGKDHTTVIHAHEKIQQLLEKDPAIQKEVSEIKNLLNS.

The segment at 1 to 74 (MPDVESFWHS…TGFKLTGAEV (74 aa)) is domain I, interacts with DnaA modulators. The domain II stretch occupies residues 74 to 109 (VMPHFVVADEKDAALAQELEEPAEEEVVFSEQSKKA). A domain III, AAA+ region region spans residues 110–326 (MLNPKYTFDT…GALVRVQAFA (217 aa)). 4 residues coordinate ATP: glycine 154, glycine 156, lysine 157, and threonine 158. Positions 327 to 447 (TINGEDITTS…VSEIKNLLNS (121 aa)) are domain IV, binds dsDNA.

This sequence belongs to the DnaA family. As to quaternary structure, oligomerizes as a right-handed, spiral filament on DNA at oriC.

The protein localises to the cytoplasm. In terms of biological role, plays an essential role in the initiation and regulation of chromosomal replication. ATP-DnaA binds to the origin of replication (oriC) to initiate formation of the DNA replication initiation complex once per cell cycle. Binds the DnaA box (a 9 base pair repeat at the origin) and separates the double-stranded (ds)DNA. Forms a right-handed helical filament on oriC DNA; dsDNA binds to the exterior of the filament while single-stranded (ss)DNA is stabiized in the filament's interior. The ATP-DnaA-oriC complex binds and stabilizes one strand of the AT-rich DNA unwinding element (DUE), permitting loading of DNA polymerase. After initiation quickly degrades to an ADP-DnaA complex that is not apt for DNA replication. Binds acidic phospholipids. Strand separation requires the DnaA boxes and adjacent DnaA-trio motifs as well as ATP. This is Chromosomal replication initiator protein DnaA from Enterococcus faecalis (strain ATCC 700802 / V583).